A 603-amino-acid chain; its full sequence is Conglutin beta 2 (603 aa).

The first 30 residues, 1-30 (MANMRVKFPTLVLLLGIVFLMAVSIGIAYG), serve as a signal peptide directing secretion. The span at 36–105 (KNHERPQERE…REPSRGREQE (70 aa)) shows a compositional bias: basic and acidic residues. Disordered stretches follow at residues 36-177 (KNHE…RNPY), 343-363 (DGQE…DQGV), and 375-399 (LRKH…LRSD). Over residues 137–147 (QGSSSSSGRQS) the composition is skewed to low complexity. Residues 148 to 172 (GYERREQREEREQQQEQDSRSESRR) show a composition bias toward basic and acidic residues. Positions 177–335 (YYFSYERFQT…TFNTRYEEIQ (159 aa)) constitute a Cupin type-1 1 domain. Residues 381–393 (SSSGKGKPSESGP) are compositionally biased toward low complexity. The region spanning 394-554 (FNLRSDEPIY…TFPGSVEDVE (161 aa)) is the Cupin type-1 2 domain. Asn504 carries an N-linked (GlcNAc...) asparagine glycan. Residues 564 to 574 (YFANAQPQQQQ) show a composition bias toward low complexity. The tract at residues 564–583 (YFANAQPQQQQQREKEGRRG) is disordered.

This sequence belongs to the 7S seed storage protein family. In terms of assembly, component of globulins complexes which accumulate in seeds.

Functionally, seed storage protein. Accumulates during seed development and is hydrolyzed after germination to provide a carbon and nitrogen source for the developing seedling. This chain is Conglutin beta 2, found in Lupinus angustifolius (Narrow-leaved blue lupine).